The sequence spans 119 residues: Centrocin 1 (119 aa).

The N-terminal stretch at 1–20 is a signal peptide; that stretch reads MMIKIAVVLCAVMATTMVRA. A propeptide spanning residues 21–50 is cleaved from the precursor; that stretch reads KYVEEQELADLLDLLISEEVSSPDDAVALQ. Residues tryptophan 52 and tryptophan 53 each carry the 6'-bromotryptophan modification. A disulfide bond links cysteine 75 and cysteine 110. Residues 81–104 constitute a propeptide that is removed on maturation; that stretch reads SPQEARAKVLEAFPEMKEADLDEE. Residue asparagine 117 is modified to Asparagine amide.

In terms of assembly, heterodimer of a light and a heavy chain, probably disulfide-linked.

Its function is as follows. Has antimicrobial activity against Gram-negative bacteria, Gram-positive bacteria and against fungi with minimum inhibitory concentration (MIC) between 0.78 uM and 50 uM. Shows little hemolytic activity even at a concentration of 100 uM. In terms of biological role, has no antimicrobial activity. Shows no hemolytic activity. This is Centrocin 1 from Echinus esculentus (Sea urchin).